The primary structure comprises 189 residues: Glutathione-dependent formaldehyde-activating enzyme (189 aa).

The 148-residue stretch at 20–167 (FAGGTLVCKC…LKELGLEPYD (148 aa)) folds into the CENP-V/GFA domain. Positions 27, 29, 48, 50, 53, 95, and 98 each coordinate Zn(2+).

Belongs to the Gfa family. The cofactor is Zn(2+).

It catalyses the reaction S-(hydroxymethyl)glutathione = glutathione + formaldehyde. It functions in the pathway one-carbon metabolism; formaldehyde degradation; formate from formaldehyde (glutathione route): step 1/3. In terms of biological role, catalyzes the condensation of formaldehyde and glutathione to S-hydroxymethylglutathione. The polypeptide is Glutathione-dependent formaldehyde-activating enzyme (Rhodopseudomonas palustris (strain BisB18)).